A 401-amino-acid chain; its full sequence is 8-amino-7-oxononanoate synthase (401 aa).

R24 contacts substrate. Pyridoxal 5'-phosphate is bound at residue 111-112; that stretch reads GF. H137 contributes to the substrate binding site. 3 residues coordinate pyridoxal 5'-phosphate: S183, H211, and T240. The residue at position 243 (K243) is an N6-(pyridoxal phosphate)lysine. T357 lines the substrate pocket.

The protein belongs to the class-II pyridoxal-phosphate-dependent aminotransferase family. BioF subfamily. In terms of assembly, homodimer. Pyridoxal 5'-phosphate is required as a cofactor.

The catalysed reaction is 6-carboxyhexanoyl-[ACP] + L-alanine + H(+) = (8S)-8-amino-7-oxononanoate + holo-[ACP] + CO2. Its pathway is cofactor biosynthesis; biotin biosynthesis. Its function is as follows. Catalyzes the decarboxylative condensation of pimeloyl-[acyl-carrier protein] and L-alanine to produce 8-amino-7-oxononanoate (AON), [acyl-carrier protein], and carbon dioxide. The polypeptide is 8-amino-7-oxononanoate synthase (Xanthomonas axonopodis pv. citri (strain 306)).